We begin with the raw amino-acid sequence, 428 residues long: CinA-like protein (428 aa).

The protein belongs to the CinA family.

This is CinA-like protein from Chlorobium phaeovibrioides (strain DSM 265 / 1930) (Prosthecochloris vibrioformis (strain DSM 265)).